We begin with the raw amino-acid sequence, 279 residues long: 3-methyl-2-oxobutanoate hydroxymethyltransferase (279 aa).

Residues D43 and D82 each coordinate Mg(2+). 3-methyl-2-oxobutanoate-binding positions include 43-44 (DS), D82, and K112. E114 is a binding site for Mg(2+). The Proton acceptor role is filled by E181.

Belongs to the PanB family. Homodecamer; pentamer of dimers. Requires Mg(2+) as cofactor.

The protein resides in the cytoplasm. It catalyses the reaction 3-methyl-2-oxobutanoate + (6R)-5,10-methylene-5,6,7,8-tetrahydrofolate + H2O = 2-dehydropantoate + (6S)-5,6,7,8-tetrahydrofolate. It participates in cofactor biosynthesis; (R)-pantothenate biosynthesis; (R)-pantoate from 3-methyl-2-oxobutanoate: step 1/2. In terms of biological role, catalyzes the reversible reaction in which hydroxymethyl group from 5,10-methylenetetrahydrofolate is transferred onto alpha-ketoisovalerate to form ketopantoate. This is 3-methyl-2-oxobutanoate hydroxymethyltransferase from Bacillus anthracis (strain A0248).